The sequence spans 452 residues: Xaa-Pro dipeptidase 1 (452 aa).

Asp-247, Asp-258, His-338, Glu-383, and Glu-422 together coordinate Mn(2+).

Belongs to the peptidase M24B family. Bacterial-type prolidase subfamily. Mn(2+) serves as cofactor.

The enzyme catalyses Xaa-L-Pro dipeptide + H2O = an L-alpha-amino acid + L-proline. Splits dipeptides with a prolyl residue in the C-terminal position. This Idiomarina loihiensis (strain ATCC BAA-735 / DSM 15497 / L2-TR) protein is Xaa-Pro dipeptidase 1.